The following is a 232-amino-acid chain: 26.5 kDa heat shock protein, mitochondrial (232 aa).

The N-terminal 42 residues, 1-42 (MALARLALRNLQQKLSPSLMGQSCERGLVGNRHNPMKLNRFM), are a transit peptide targeting the mitochondrion. The segment at 44 to 82 (TSAGEQEDKMNTEVSVSEKKSPRQNFPRRRGRKSLWRNT) is disordered. Positions 49-64 (QEDKMNTEVSVSEKKS) are enriched in basic and acidic residues. Basic residues predominate over residues 69–78 (FPRRRGRKSL). Residues 114-232 (IFDNFNVNPF…KKNVQEISVE (119 aa)) form the sHSP domain.

It belongs to the small heat shock protein (HSP20) family. In terms of assembly, may form oligomeric structures.

It localises to the mitochondrion. This chain is 26.5 kDa heat shock protein, mitochondrial (HSP26.5), found in Arabidopsis thaliana (Mouse-ear cress).